A 240-amino-acid polypeptide reads, in one-letter code: Endonuclease NBR9 (240 aa).

Residues 1 to 24 (MKGTGGVVVGTQNPVRDYNHSTDE) are disordered. The Smr domain occupies 97 to 173 (IDLHGLYVKE…NSGVLVLELQ (77 aa)). The segment at 181–219 (GPAVNAPTNQYNAQPHPQYNNNGGQPQGQAQNYNNSGND) is disordered. A compositionally biased stretch (low complexity) spans 194 to 215 (QPHPQYNNNGGQPQGQAQNYNN).

Its subcellular location is the cytoplasm. In terms of biological role, endonuclease involved in nonstop mRNA decay via the formation of mRNA cleavage fragments in the vicinity of stalled ribosomes. The protein is Endonuclease NBR9 of Saccharomyces cerevisiae (strain ATCC 204508 / S288c) (Baker's yeast).